The chain runs to 390 residues: Argininosuccinate synthase (390 aa).

6 to 14 (SYSGGLDTT) serves as a coordination point for ATP. Position 83 (Tyr-83) interacts with L-citrulline. Residue Gly-113 coordinates ATP. The L-aspartate site is built by Thr-115, Asn-119, and Asp-120. Residue Asn-119 participates in L-citrulline binding. The L-citrulline site is built by Arg-123, Ser-169, Ser-178, Glu-254, and Tyr-266.

Belongs to the argininosuccinate synthase family. Type 1 subfamily. As to quaternary structure, homotetramer.

Its subcellular location is the cytoplasm. The enzyme catalyses L-citrulline + L-aspartate + ATP = 2-(N(omega)-L-arginino)succinate + AMP + diphosphate + H(+). Its pathway is amino-acid biosynthesis; L-arginine biosynthesis; L-arginine from L-ornithine and carbamoyl phosphate: step 2/3. The chain is Argininosuccinate synthase from Archaeoglobus fulgidus (strain ATCC 49558 / DSM 4304 / JCM 9628 / NBRC 100126 / VC-16).